Reading from the N-terminus, the 460-residue chain is MKRRTDLDTKSSRKVYKKYEYTEIGSIEEENEASINFYAVVIDACFPYKVDEKKYMCYLKVIDTTHNVKEGDDNFAIVALQSRKFEDLPIIQRCGDIIRVHRAEYNYKDDQHYFKLNMSYSSSWALFSADEEVAPEVIKDEGDDFTYRSYAYSGKQYNFDTQDQKLLKNTRAWNKSYFAKNDVIIDEMYTPLSQARQEEGDFNVVGKVTQIVHRDYYTSDLRVKDTSKATWFLTVSRRKFPRLYEGVIIKIRSVNIDSETERERCLELAPHSNIMTFVPFSRLAKSLDSQISLSPDKVDKELIKKVILTEPVLATTTFGDYSELPLTELSEIFEDVTDKDAVFRARFSILKITPDRVEDYVEEYTPKGAPRSKPVYKVQFLIKDPSTALNDNLYKIYLYSHGDLGKEFFPGVDPSSAQTPSGHSKLRKYASTLMKFNVHIDAVLEKVGGAFFIRDTEMKF.

The protein belongs to the telombin family.

It localises to the nucleus. Its subcellular location is the chromosome. The protein resides in the telomere. Its function is as follows. May bind telomeric T4G4 sequences. This chain is Telomere-binding protein homolog, found in Euplotes crassus.